The primary structure comprises 44 residues: pyr operon leader peptide (44 aa).

The protein is pyr operon leader peptide (pyrL) of Shigella flexneri.